A 1050-amino-acid polypeptide reads, in one-letter code: Elongation factor 3 (1050 aa).

Residues Val-43 and His-45 each contribute to the ADP site. The HEAT 1 repeat unit spans residues 46–83; the sequence is DVPVEFFEDLKKQIQSKDAKVSLAALDAYKHIASTNGL. Ser-86 serves as a coordination point for ADP. HEAT repeat units follow at residues 89-126, 127-165, 169-206, 208-244, 245-282, and 288-326; these read PYVV…AITP, TAVK…TAKA, LRMP…TIDN, DIEK…EVTM, ATLS…LVED, and PFMD…VGAV. Residues Thr-395, His-399, and Glu-400 each contribute to the ADP site. ABC transporter domains follow at residues 429–646 and 672–998; these read DEGE…YYEL and VKVS…KKDD. The ADP site is built by Asn-708, Glu-927, Asn-930, and His-956. The disordered stretch occupies residues 980–1050; that stretch reads GHNWVQGQGS…DAYVSSDEEF (71 aa). Residues 1013–1037 are compositionally biased toward basic residues; that stretch reads AAKKKKKLSSAELRKKKKERMKKKK.

The protein belongs to the ABC transporter superfamily. ABCF family. EF3 subfamily. In terms of assembly, monomer.

It localises to the cytoplasm. It carries out the reaction ATP + H2O = ADP + phosphate + H(+). It participates in protein biosynthesis; polypeptide chain elongation. In terms of biological role, ribosome-dependent ATPase that functions in cytoplasmic translation elongation. Required for the ATP-dependent release of deacylated tRNA from the ribosomal E-site during protein biosynthesis. Stimulates the eEF1A-dependent binding of aminoacyl-tRNA to the ribosomal A-site, which has reduced affinity for tRNA as long as the E-site is occupied. Assists translation termination by stimulating the release of nascent protein from the ribosome by release factors. This chain is Elongation factor 3 (CEF3), found in Candida albicans (strain SC5314 / ATCC MYA-2876) (Yeast).